The following is a 467-amino-acid chain: uncharacterized protein (467 aa).

Sel1-like repeat units follow at residues 38-73 (PAAA…EQGH), 107-138 (PEAQ…KNNN), 139-172 (PHGQ…AQGL), 173-208 (PEAH…QQGY), 240-275 (PDAH…AERH), 276-311 (PEGL…EAGS), 343-378 (AERL…ELGH), 379-414 (SKAQ…AKKD), and 415-450 (SMAF…NNGY).

This is an uncharacterized protein from Neisseria meningitidis serogroup B (strain ATCC BAA-335 / MC58).